The sequence spans 702 residues: Ribosomal RNA large subunit methyltransferase K/L (702 aa).

The THUMP domain maps to 43 to 154 (LVYQSLMWSR…KETASIALDL (112 aa)).

It belongs to the methyltransferase superfamily. RlmKL family.

It localises to the cytoplasm. It catalyses the reaction guanosine(2445) in 23S rRNA + S-adenosyl-L-methionine = N(2)-methylguanosine(2445) in 23S rRNA + S-adenosyl-L-homocysteine + H(+). The enzyme catalyses guanosine(2069) in 23S rRNA + S-adenosyl-L-methionine = N(2)-methylguanosine(2069) in 23S rRNA + S-adenosyl-L-homocysteine + H(+). Functionally, specifically methylates the guanine in position 2445 (m2G2445) and the guanine in position 2069 (m7G2069) of 23S rRNA. This chain is Ribosomal RNA large subunit methyltransferase K/L, found in Escherichia coli (strain K12 / DH10B).